Here is a 232-residue protein sequence, read N- to C-terminus: 2-C-methyl-D-erythritol 4-phosphate cytidylyltransferase (232 aa).

The protein belongs to the IspD/TarI cytidylyltransferase family. IspD subfamily.

It catalyses the reaction 2-C-methyl-D-erythritol 4-phosphate + CTP + H(+) = 4-CDP-2-C-methyl-D-erythritol + diphosphate. Its pathway is isoprenoid biosynthesis; isopentenyl diphosphate biosynthesis via DXP pathway; isopentenyl diphosphate from 1-deoxy-D-xylulose 5-phosphate: step 2/6. Functionally, catalyzes the formation of 4-diphosphocytidyl-2-C-methyl-D-erythritol from CTP and 2-C-methyl-D-erythritol 4-phosphate (MEP). This chain is 2-C-methyl-D-erythritol 4-phosphate cytidylyltransferase, found in Stenotrophomonas maltophilia (strain K279a).